Here is a 407-residue protein sequence, read N- to C-terminus: Putative polysaccharide ligase RF_0568 (407 aa).

10 consecutive transmembrane segments (helical) span residues 15 to 35 (LGMV…LMLF), 71 to 91 (MTIK…LFAI), 100 to 120 (FIQV…VPFG), 129 to 149 (LILG…SHGF), 166 to 186 (GCAL…SSGK), 203 to 223 (ISDS…FILA), 229 to 249 (IFFK…PVIA), 272 to 292 (LFIW…GYGF), 324 to 344 (ILQI…CLVY), and 379 to 399 (IWQI…KLLV).

The protein belongs to the O-antigen ligase family.

The protein resides in the membrane. The polypeptide is Putative polysaccharide ligase RF_0568 (Rickettsia felis (strain ATCC VR-1525 / URRWXCal2) (Rickettsia azadi)).